A 294-amino-acid chain; its full sequence is Glycine--tRNA ligase alpha subunit (294 aa).

The protein belongs to the class-II aminoacyl-tRNA synthetase family. Tetramer of two alpha and two beta subunits.

It is found in the cytoplasm. It catalyses the reaction tRNA(Gly) + glycine + ATP = glycyl-tRNA(Gly) + AMP + diphosphate. This Polynucleobacter asymbioticus (strain DSM 18221 / CIP 109841 / QLW-P1DMWA-1) (Polynucleobacter necessarius subsp. asymbioticus) protein is Glycine--tRNA ligase alpha subunit.